Here is a 348-residue protein sequence, read N- to C-terminus: Dihydroorotase (348 aa).

Histidine 14 and histidine 16 together coordinate Zn(2+). Substrate-binding positions include 16–18 (HLR) and asparagine 42. Lysine 100, histidine 137, and histidine 175 together coordinate Zn(2+). Lysine 100 carries the N6-carboxylysine modification. Histidine 137 serves as a coordination point for substrate. Leucine 220 is a substrate binding site. Aspartate 248 contributes to the Zn(2+) binding site. Aspartate 248 is a catalytic residue. Residues histidine 252 and alanine 264 each contribute to the substrate site.

The protein belongs to the metallo-dependent hydrolases superfamily. DHOase family. Class II DHOase subfamily. Homodimer. Zn(2+) serves as cofactor.

The enzyme catalyses (S)-dihydroorotate + H2O = N-carbamoyl-L-aspartate + H(+). Its pathway is pyrimidine metabolism; UMP biosynthesis via de novo pathway; (S)-dihydroorotate from bicarbonate: step 3/3. Catalyzes the reversible cyclization of carbamoyl aspartate to dihydroorotate. The chain is Dihydroorotase from Pseudomonas putida (strain ATCC 700007 / DSM 6899 / JCM 31910 / BCRC 17059 / LMG 24140 / F1).